The following is a 298-amino-acid chain: ADP/ATP translocase 3 (298 aa).

Met1 is modified (N-acetylmethionine). The Mitochondrial intermembrane portion of the chain corresponds to Met1–Ser7. Thr2 carries the N-acetylthreonine; in ADP/ATP translocase 3, N-terminally processed modification. The Solcar 1 repeat unit spans residues Ile6–Ile98. A helical membrane pass occupies residues Phe8–Gln37. The Mitochondrial matrix portion of the chain corresponds to Val38–Asn74. An N6,N6,N6-trimethyllysine modification is found at Lys52. The chain crosses the membrane as a helical span at residues Leu75 to Phe99. ADP is bound by residues Arg80 and Lys92. At Leu100–Phe109 the chain is on the mitochondrial intermembrane side. Lys105 is subject to N6-acetyllysine. A helical membrane pass occupies residues Trp110–Phe130. 2 Solcar repeats span residues Arg111–Met201 and Val212–Val297. Over Val131–Asn178 the chain is Mitochondrial matrix. The chain crosses the membrane as a helical span at residues Val179–Lys199. Residues Gly200–Ile210 lie on the Mitochondrial intermembrane side of the membrane. A helical membrane pass occupies residues Val211–Phe231. Residues Asp232 to Gly273 are Mitochondrial matrix-facing. Arg235 is a binding site for ADP. Residues Arg235–Met240 form an important for transport activity region. Residues Arg235 to Met240 carry the Nucleotide carrier signature motif motif. The residue at position 268 (Lys268) is an N6-acetyllysine. A helical membrane pass occupies residues Ala274–Tyr291. Residues Asp292–Ile298 lie on the Mitochondrial intermembrane side of the membrane.

Belongs to the mitochondrial carrier (TC 2.A.29) family. Monomer. Found in a complex with ARL2, ARL2BP and SLC25A6/ANT3. Post-translationally, trimethylated by ANTKMT at Lys-52.

Its subcellular location is the mitochondrion inner membrane. It localises to the membrane. It carries out the reaction ADP(in) + ATP(out) = ADP(out) + ATP(in). The catalysed reaction is H(+)(in) = H(+)(out). Its activity is regulated as follows. The matrix-open state (m-state) is inhibited by the membrane-permeable bongkrekic acid (BKA). The cytoplasmic-open state (c-state) is inhibited by the membrane-impermeable toxic inhibitor carboxyatractyloside (CATR). Proton transporter activity is inhibited by ADP:ATP antiporter activity. In terms of biological role, ADP:ATP antiporter that mediates import of ADP into the mitochondrial matrix for ATP synthesis, and export of ATP out to fuel the cell. Cycles between the cytoplasmic-open state (c-state) and the matrix-open state (m-state): operates by the alternating access mechanism with a single substrate-binding site intermittently exposed to either the cytosolic (c-state) or matrix (m-state) side of the inner mitochondrial membrane. In addition to its ADP:ATP antiporter activity, also involved in mitochondrial uncoupling and mitochondrial permeability transition pore (mPTP) activity. Plays a role in mitochondrial uncoupling by acting as a proton transporter: proton transport uncouples the proton flows via the electron transport chain and ATP synthase to reduce the efficiency of ATP production and cause mitochondrial thermogenesis. Proton transporter activity is inhibited by ADP:ATP antiporter activity, suggesting that SLC25A6/ANT3 acts as a master regulator of mitochondrial energy output by maintaining a delicate balance between ATP production (ADP:ATP antiporter activity) and thermogenesis (proton transporter activity). Proton transporter activity requires free fatty acids as cofactor, but does not transport it. Also plays a key role in mPTP opening, a non-specific pore that enables free passage of the mitochondrial membranes to solutes of up to 1.5 kDa, and which contributes to cell death. It is however unclear if SLC25A6/ANT3 constitutes a pore-forming component of mPTP or regulates it. In Sus scrofa (Pig), this protein is ADP/ATP translocase 3.